The following is a 433-amino-acid chain: GTPase Obg (433 aa).

Positions 1 to 159 (MKFVDSADLI…FEIRAELKVL (159 aa)) constitute an Obg domain. Residues 160–332 (ADVGFVGLPN…LLFMIYEELK (173 aa)) enclose the OBG-type G domain. GTP-binding positions include 166–173 (GLPNAGKS), 191–195 (FTTIN), 213–216 (DLPG), 284–287 (NKMD), and 313–315 (SGL). The Mg(2+) site is built by S173 and T193. Residues 355 to 433 (KFEEQKEDIQ…VFDYELEWTD (79 aa)) enclose the OCT domain.

Belongs to the TRAFAC class OBG-HflX-like GTPase superfamily. OBG GTPase family. In terms of assembly, monomer. Requires Mg(2+) as cofactor.

Its subcellular location is the cytoplasm. Its function is as follows. An essential GTPase which binds GTP, GDP and possibly (p)ppGpp with moderate affinity, with high nucleotide exchange rates and a fairly low GTP hydrolysis rate. Plays a role in control of the cell cycle, stress response, ribosome biogenesis and in those bacteria that undergo differentiation, in morphogenesis control. The polypeptide is GTPase Obg (Mycoplasma capricolum subsp. capricolum (strain California kid / ATCC 27343 / NCTC 10154)).